Here is a 297-residue protein sequence, read N- to C-terminus: Large ribosomal subunit protein uL3 (297 aa).

Disordered regions lie at residues 124 to 143 (NQKIGPKSHGGGGGSKPVRQ) and 258 to 297 (MKEKEKLEQEAKQNAEKSNSDDDVRKEAEKLNKNKEDKGE).

The protein belongs to the universal ribosomal protein uL3 family. Part of the 50S ribosomal subunit. Forms a cluster with proteins L14 and L19.

In terms of biological role, one of the primary rRNA binding proteins, it binds directly near the 3'-end of the 23S rRNA, where it nucleates assembly of the 50S subunit. This chain is Large ribosomal subunit protein uL3, found in Mycoplasma mobile (strain ATCC 43663 / 163K / NCTC 11711) (Mesomycoplasma mobile).